A 346-amino-acid chain; its full sequence is Cytidine deaminase 5 (346 aa).

CMP/dCMP-type deaminase domains follow at residues Thr-20–Glu-148 and Asp-183–Ala-304. Position 58-60 (Asn-58–Glu-60) interacts with substrate. His-71 is a binding site for Zn(2+). The Proton donor role is filled by Glu-73. Zn(2+) is bound by residues Cys-104 and Cys-107.

Belongs to the cytidine and deoxycytidylate deaminase family. As to quaternary structure, homodimer. It depends on Zn(2+) as a cofactor.

The catalysed reaction is cytidine + H2O + H(+) = uridine + NH4(+). It catalyses the reaction 2'-deoxycytidine + H2O + H(+) = 2'-deoxyuridine + NH4(+). In terms of biological role, this enzyme scavenges exogenous and endogenous cytidine and 2'-deoxycytidine for UMP synthesis. This chain is Cytidine deaminase 5 (CDA5), found in Arabidopsis thaliana (Mouse-ear cress).